Consider the following 39-residue polypeptide: Cytochrome b6-f complex subunit 5 (39 aa).

A helical transmembrane segment spans residues 5–25; the sequence is LLCGIVLGLVPITLLGLFVSA.

Belongs to the PetG family. As to quaternary structure, the 4 large subunits of the cytochrome b6-f complex are cytochrome b6, subunit IV (17 kDa polypeptide, PetD), cytochrome f and the Rieske protein, while the 4 small subunits are PetG, PetL, PetM and PetN. The complex functions as a dimer.

It localises to the cellular thylakoid membrane. In terms of biological role, component of the cytochrome b6-f complex, which mediates electron transfer between photosystem II (PSII) and photosystem I (PSI), cyclic electron flow around PSI, and state transitions. PetG is required for either the stability or assembly of the cytochrome b6-f complex. The sequence is that of Cytochrome b6-f complex subunit 5 from Prochlorococcus marinus (strain MIT 9301).